A 472-amino-acid polypeptide reads, in one-letter code: 3-isopropylmalate dehydratase large subunit (472 aa).

Positions 353, 414, and 417 each coordinate [4Fe-4S] cluster.

The protein belongs to the aconitase/IPM isomerase family. LeuC type 1 subfamily. In terms of assembly, heterodimer of LeuC and LeuD. [4Fe-4S] cluster serves as cofactor.

It catalyses the reaction (2R,3S)-3-isopropylmalate = (2S)-2-isopropylmalate. It participates in amino-acid biosynthesis; L-leucine biosynthesis; L-leucine from 3-methyl-2-oxobutanoate: step 2/4. Catalyzes the isomerization between 2-isopropylmalate and 3-isopropylmalate, via the formation of 2-isopropylmaleate. This chain is 3-isopropylmalate dehydratase large subunit, found in Psychrobacter cryohalolentis (strain ATCC BAA-1226 / DSM 17306 / VKM B-2378 / K5).